The chain runs to 504 residues: Probable cytochrome P450 305a1 (504 aa).

Residue Cys450 participates in heme binding.

The protein belongs to the cytochrome P450 family. The cofactor is heme.

The protein resides in the endoplasmic reticulum membrane. It is found in the microsome membrane. Its function is as follows. May be involved in the metabolism of insect hormones and in the breakdown of synthetic insecticides. This Drosophila melanogaster (Fruit fly) protein is Probable cytochrome P450 305a1 (Cyp305a1).